The primary structure comprises 295 residues: Protein PAR32 (295 aa).

Position 2 is an N-acetylalanine (Ala2). Ser36, Ser39, Ser47, Ser123, Ser138, Ser141, and Ser147 each carry phosphoserine. Over residues 134–153 (SATRSHQSLHATTSSPNNNA) the composition is skewed to polar residues. Disordered stretches follow at residues 134-156 (SATRSHQSLHATTSSPNNNAPIV) and 217-295 (TSKK…TMFN). Basic residues predominate over residues 217 to 227 (TSKKPKNKLKG). Position 246 is a phosphoserine (Ser246). Polar residues predominate over residues 246–256 (SPKSSRNTINH). The span at 265 to 274 (KFNLKDDNGK) shows a compositional bias: basic and acidic residues. Positions 275-284 (EKKKKKKKKS) are enriched in basic residues. The segment covering 285–295 (GFFSSLKTMFN) has biased composition (low complexity).

Post-translationally, hyperphosphorylated after treatment with rapamycin in a TAP42-dependent manner.

The protein localises to the cytoplasm. Involved in resistance to cisplatin. This is Protein PAR32 (PAR32) from Saccharomyces cerevisiae (strain ATCC 204508 / S288c) (Baker's yeast).